The following is a 139-amino-acid chain: Large ribosomal subunit protein bL17 (139 aa).

Residues 120-139 are disordered; sequence ESAKGQDSGPVHVEGDEEAA.

It belongs to the bacterial ribosomal protein bL17 family. Part of the 50S ribosomal subunit. Contacts protein L32.

This chain is Large ribosomal subunit protein bL17, found in Parvibaculum lavamentivorans (strain DS-1 / DSM 13023 / NCIMB 13966).